Reading from the N-terminus, the 200-residue chain is MASKIETLKANLEAALGARAVSLVEAVGELTLVVKASDYLEVAKQLRDDRSLGFEQLIDLCGVDYQTYGDGAYDGPRFAAVLHLLSVANNWRLRVRVFASDDDLPIVPSVVDIWNSANWYEREAFDLYGIVFEGHPDLRRILTDYGFIGHPFRKDFPVSGYVEMRYDPQEKRVVYQPVTIEPREITPRVIREDRYGGLKH.

This sequence belongs to the complex I 30 kDa subunit family. NDH-1 is composed of 14 different subunits. Subunits NuoB, C, D, E, F, and G constitute the peripheral sector of the complex.

It localises to the cell inner membrane. It carries out the reaction a quinone + NADH + 5 H(+)(in) = a quinol + NAD(+) + 4 H(+)(out). NDH-1 shuttles electrons from NADH, via FMN and iron-sulfur (Fe-S) centers, to quinones in the respiratory chain. The immediate electron acceptor for the enzyme in this species is believed to be ubiquinone. Couples the redox reaction to proton translocation (for every two electrons transferred, four hydrogen ions are translocated across the cytoplasmic membrane), and thus conserves the redox energy in a proton gradient. This chain is NADH-quinone oxidoreductase subunit C, found in Burkholderia mallei (strain NCTC 10247).